The chain runs to 353 residues: Uroporphyrinogen decarboxylase (353 aa).

Residues 29–33, Asp-79, Tyr-156, Thr-211, and His-329 each bind substrate; that span reads RQAGR.

Belongs to the uroporphyrinogen decarboxylase family. In terms of assembly, homodimer.

It is found in the cytoplasm. The enzyme catalyses uroporphyrinogen III + 4 H(+) = coproporphyrinogen III + 4 CO2. It participates in porphyrin-containing compound metabolism; protoporphyrin-IX biosynthesis; coproporphyrinogen-III from 5-aminolevulinate: step 4/4. Its function is as follows. Catalyzes the decarboxylation of four acetate groups of uroporphyrinogen-III to yield coproporphyrinogen-III. The chain is Uroporphyrinogen decarboxylase from Alcanivorax borkumensis (strain ATCC 700651 / DSM 11573 / NCIMB 13689 / SK2).